Here is a 262-residue protein sequence, read N- to C-terminus: Hemin import ATP-binding protein HmuV (262 aa).

The ABC transporter domain occupies L5–E242. G37–S44 contributes to the ATP binding site.

The protein belongs to the ABC transporter superfamily. Heme (hemin) importer (TC 3.A.1.14.5) family. The complex is composed of two ATP-binding proteins (HmuV), two transmembrane proteins (HmuU) and a solute-binding protein (HmuT).

Its subcellular location is the cell inner membrane. Its function is as follows. Part of the ABC transporter complex HmuTUV involved in hemin import. Responsible for energy coupling to the transport system. The polypeptide is Hemin import ATP-binding protein HmuV (Rhodopseudomonas palustris (strain HaA2)).